A 494-amino-acid chain; its full sequence is Histidine--tRNA ligase (494 aa).

It belongs to the class-II aminoacyl-tRNA synthetase family. As to quaternary structure, homodimer.

It localises to the cytoplasm. The catalysed reaction is tRNA(His) + L-histidine + ATP = L-histidyl-tRNA(His) + AMP + diphosphate + H(+). The sequence is that of Histidine--tRNA ligase from Cereibacter sphaeroides (strain ATCC 17023 / DSM 158 / JCM 6121 / CCUG 31486 / LMG 2827 / NBRC 12203 / NCIMB 8253 / ATH 2.4.1.) (Rhodobacter sphaeroides).